Here is a 161-residue protein sequence, read N- to C-terminus: Vitamin K epoxide reductase complex subunit 1 (161 aa).

Residues 1–9 (MGTTWRSPG) are Cytoplasmic-facing. Residues 10-29 (RLRLALCLAGLALSLYALHV) traverse the membrane as a helical segment. The Lumenal segment spans residues 30–80 (KAARARNEDYRALCDVGTAISCSRVFSSRWGRGFGLVEHVLGADSILNQSN). A disulfide bond links Cys43 and Cys51. A (S)-warfarin-binding site is contributed by Asn80. The helical transmembrane segment at 81-95 (SIFGCMFYTIQLLLG) threads the bilayer. Over 96-100 (CLRGR) the chain is Cytoplasmic. A helical membrane pass occupies residues 101 to 128 (WASILLILSSLVSVAGSLYLAWILFFVL). Residues 129–131 (YDF) are Lumenal-facing. A disulfide bond links Cys132 and Cys135. A helical transmembrane segment spans residues 132 to 153 (CIVCITTYAINAGLMLLSFQKV). Residues Cys135 and Tyr139 each contribute to the phylloquinone site. Residue Tyr139 participates in (S)-warfarin binding. Topologically, residues 154–161 (PEHKVKKP) are cytoplasmic.

This sequence belongs to the VKOR family. As to expression, highly expressed in liver. Detected at lower levels in lung, kidney and testis.

The protein localises to the endoplasmic reticulum membrane. It catalyses the reaction phylloquinone + [protein]-disulfide + H2O = 2,3-epoxyphylloquinone + [protein]-dithiol. The enzyme catalyses phylloquinol + [protein]-disulfide = phylloquinone + [protein]-dithiol. Its activity is regulated as follows. Inhibited by warfarin (coumadin). Warfarin locks VKORC1 in both redox states into the closed conformation. Involved in vitamin K metabolism. Catalytic subunit of the vitamin K epoxide reductase (VKOR) complex which reduces inactive vitamin K 2,3-epoxide to active vitamin K. Vitamin K is required for the gamma-carboxylation of various proteins, including clotting factors, and is required for normal blood coagulation, but also for normal bone development. This chain is Vitamin K epoxide reductase complex subunit 1 (Vkorc1), found in Rattus norvegicus (Rat).